We begin with the raw amino-acid sequence, 327 residues long: Olfactory receptor 6A2 (327 aa).

At 1–26 (MEWRNHSGRVSEFVLLGFPAPAPLQV) the chain is on the extracellular side. An N-linked (GlcNAc...) asparagine glycan is attached at Asn5. Residues 27–47 (LLFALLLLAYVLVLTENTLII) traverse the membrane as a helical segment. Residues 48–55 (MAIRNHST) are Cytoplasmic-facing. The chain crosses the membrane as a helical span at residues 56–76 (LHKPMYFFLANMSFLEIWYVT). Residues 77–104 (VTIPKMLAGFVGSKQDHGQLISFEGCMT) lie on the Extracellular side of the membrane. Cys102 and Cys194 are disulfide-bonded. A helical transmembrane segment spans residues 105–125 (QLYFFLGLGCTECVLLAVMAY). Topologically, residues 126–144 (DRYMAICYPLHYPVIVSGR) are cytoplasmic. The helical transmembrane segment at 145–165 (LCVQMAAGSWAGGFGISMVKV) threads the bilayer. Topologically, residues 166–201 (FLISGLSYCGPNIINHFFCDVSPLLNLSCTDMSTAE) are extracellular. Asn191 carries an N-linked (GlcNAc...) asparagine glycan. The chain crosses the membrane as a helical span at residues 202–222 (LTDFILAIFILLGPLSVTGAS). The Cytoplasmic portion of the chain corresponds to 223–242 (YVAITGAVMHIPSAAGRYKA). Residues 243–263 (FSTCASHLTVVIIFYAASIFI) traverse the membrane as a helical segment. At 264-276 (YARPKALSAFDTN) the chain is on the extracellular side. Residues 277 to 297 (KLVSVLYAVIVPLLNPIIYCL) traverse the membrane as a helical segment. At 298–327 (RNQEVKRALCCTLHLYQHQDPDPKKASRNV) the chain is on the cytoplasmic side.

Belongs to the G-protein coupled receptor 1 family.

Its subcellular location is the cell membrane. Its function is as follows. Odorant receptor. This chain is Olfactory receptor 6A2 (OR6A2), found in Homo sapiens (Human).